We begin with the raw amino-acid sequence, 419 residues long: Farnesyl pyrophosphate synthase (419 aa).

Met-1 carries the N-acetylmethionine modification. Isopentenyl diphosphate contacts are provided by Lys-123, Arg-126, and Gln-162. N6-(2-hydroxyisobutyryl)lysine; alternate is present on Lys-123. An N6-acetyllysine; alternate modification is found at Lys-123. Residues Asp-169 and Asp-173 each coordinate Mg(2+). Residue Arg-178 participates in dimethylallyl diphosphate binding. Arg-179 is a binding site for isopentenyl diphosphate. Residues Lys-266, Thr-267, Gln-306, Lys-323, and Lys-332 each contribute to the dimethylallyl diphosphate site. Lys-353 carries the N6-acetyllysine modification.

This sequence belongs to the FPP/GGPP synthase family. In terms of assembly, homodimer. Interacts with RSAD2. (Microbial infection) Interacts with HTLV-1 protein p13(II). Mg(2+) is required as a cofactor.

The protein resides in the cytoplasm. The catalysed reaction is isopentenyl diphosphate + dimethylallyl diphosphate = (2E)-geranyl diphosphate + diphosphate. It catalyses the reaction isopentenyl diphosphate + (2E)-geranyl diphosphate = (2E,6E)-farnesyl diphosphate + diphosphate. It participates in isoprenoid biosynthesis; farnesyl diphosphate biosynthesis; farnesyl diphosphate from geranyl diphosphate and isopentenyl diphosphate: step 1/1. Its pathway is isoprenoid biosynthesis; geranyl diphosphate biosynthesis; geranyl diphosphate from dimethylallyl diphosphate and isopentenyl diphosphate: step 1/1. Inactivated by interferon-induced RSAD2. This inactivation may result of disruption of lipid rafts at the plasma membrane, and thus have an antiviral effect since many enveloped viruses need lipid rafts to bud efficiently out of the cell. Functionally, key enzyme in isoprenoid biosynthesis which catalyzes the formation of farnesyl diphosphate (FPP), a precursor for several classes of essential metabolites including sterols, dolichols, carotenoids, and ubiquinones. FPP also serves as substrate for protein farnesylation and geranylgeranylation. Catalyzes the sequential condensation of isopentenyl pyrophosphate with the allylic pyrophosphates, dimethylallyl pyrophosphate, and then with the resultant geranylpyrophosphate to the ultimate product farnesyl pyrophosphate. This chain is Farnesyl pyrophosphate synthase, found in Homo sapiens (Human).